Reading from the N-terminus, the 342-residue chain is MITPQEALQRTIEHREIFHDEMLHLMRLIMRGDMSPVMAAAIITGLRVKKETIGEITAAATVMREFARHVDVQDNSNFVDIVGTGGDGSHTFNISTATMFVSAAAGAKVAKHGNRGVSSKSGSADVLEALGVNIDLQPEQVAASITETGMGFMFAPNHHPAMKNIAPVRRELGVRTIFNILGPLTNPAGAPNQLQGVFHPDLVGIQVRVMQRLGARHVLVVYGRDGMDEVSLGAATLVGELRNGEITEYEIHPEDFGMQMVSNRTLKVADAAESKVLLLEALDNKPGVAREIVTLNAGTALYSANVAESIADGIRLAREAIASGKARAKVDELVRFTQQFKH.

Residues glycine 83, 86–87 (GD), threonine 91, 93–96 (NIST), 111–119 (KHGNRGVSS), and serine 123 contribute to the 5-phospho-alpha-D-ribose 1-diphosphate site. Glycine 83 is an anthranilate binding site. Serine 95 provides a ligand contact to Mg(2+). Asparagine 114 provides a ligand contact to anthranilate. Arginine 169 is an anthranilate binding site. Positions 228 and 229 each coordinate Mg(2+).

The protein belongs to the anthranilate phosphoribosyltransferase family. In terms of assembly, homodimer. Mg(2+) serves as cofactor.

It carries out the reaction N-(5-phospho-beta-D-ribosyl)anthranilate + diphosphate = 5-phospho-alpha-D-ribose 1-diphosphate + anthranilate. Its pathway is amino-acid biosynthesis; L-tryptophan biosynthesis; L-tryptophan from chorismate: step 2/5. Functionally, catalyzes the transfer of the phosphoribosyl group of 5-phosphorylribose-1-pyrophosphate (PRPP) to anthranilate to yield N-(5'-phosphoribosyl)-anthranilate (PRA). The chain is Anthranilate phosphoribosyltransferase from Paraburkholderia phymatum (strain DSM 17167 / CIP 108236 / LMG 21445 / STM815) (Burkholderia phymatum).